Reading from the N-terminus, the 35-residue chain is Phosphoribulokinase (35 aa).

Belongs to the phosphoribulokinase family.

It localises to the plastid. It is found in the chloroplast. The enzyme catalyses D-ribulose 5-phosphate + ATP = D-ribulose 1,5-bisphosphate + ADP + H(+). It participates in carbohydrate biosynthesis; Calvin cycle. Its activity is regulated as follows. Light regulated via thioredoxin by reversible oxidation/reduction of sulfhydryl/disulfide groups. The protein is Phosphoribulokinase of Pinus pinaster (Maritime pine).